The chain runs to 1461 residues: Gag-Pro-Pol polyprotein (1461 aa).

A lipid anchor (N-myristoyl glycine; by host) is attached at Gly-2. Residues 94 to 97 (PSAP) carry the PTAP/PSAP motif motif. Residues 94-121 (PSAPAAPVPTPICPTTTPPPPPPPSPEA) form a disordered region. The span at 97–121 (PAAPVPTPICPTTTPPPPPPPSPEA) shows a compositional bias: pro residues. Residues 124 to 127 (PPPY) carry the PPXY motif motif. Positions 130 to 133 (PTTT) match the PTAP/PSAP motif motif. 2 consecutive CCHC-type zinc fingers follow at residues 361–378 (QPCFRCGKVGHWSRDCTQ) and 384–401 (GPCPLCQDPSHWKRDCPQ). The interval 399-425 (CPQLKPPQEEGEPLLLDLPSTSGTTEE) is disordered. The region spanning 473-551 (TQALLDTGAD…NKWTIIGRDA (79 aa)) is the Peptidase A2 domain. Catalysis depends on Asp-478, which acts as the For protease activity; shared with dimeric partner. Residues 612-802 (LEAGHIEPYS…GQIRFLGQVI (191 aa)) enclose the Reverse transcriptase domain. Residues Asp-678, Asp-753, Asp-754, Asp-1038, Glu-1073, Asp-1095, Asp-1156, Asp-1229, and Asp-1286 each coordinate Mg(2+). The RNase H type-1 domain occupies 1029–1164 (LDTAPCLFSD…TDSLILAPLV (136 aa)). Positions 1218 to 1387 (RGLLPNHIWQ…PPIPEASTPP (170 aa)) constitute an Integrase catalytic domain. Residues 1392–1441 (KWFYYKLPGLTNQRWKGPLQSLQEAAGAALLSIDGSPRWIPWRFLKKAAC) constitute a DNA-binding region (integrase-type).

Homodimer; the homodimers are part of the immature particles. Interacts with human TSG101 and NEDD4; these interactions are essential for budding and release of viral particles. As to quaternary structure, homodimer; further assembles as homohexamers. Mg(2+) is required as a cofactor. Phosphorylation of the matrix protein p19 by MAPK1 seems to play a role in budding. In terms of processing, myristoylated. Myristoylation of the matrix (MA) domain mediates the transport and binding of Gag polyproteins to the host plasma membrane and is required for the assembly of viral particles. Post-translationally, specific enzymatic cleavages by the viral protease yield mature proteins. The polyprotein is cleaved during and after budding, this process is termed maturation. The protease is autoproteolytically processed at its N- and C-termini.

Its subcellular location is the virion. It carries out the reaction Endonucleolytic cleavage to 5'-phosphomonoester.. The catalysed reaction is DNA(n) + a 2'-deoxyribonucleoside 5'-triphosphate = DNA(n+1) + diphosphate. Functionally, the matrix domain targets Gag, Gag-Pro and Gag-Pro-Pol polyproteins to the plasma membrane via a multipartite membrane binding signal, that includes its myristoylated N-terminus. Its function is as follows. Matrix protein. In terms of biological role, forms the spherical core of the virus that encapsulates the genomic RNA-nucleocapsid complex. Binds strongly to viral nucleic acids and promote their aggregation. Also destabilizes the nucleic acids duplexes via highly structured zinc-binding motifs. Functionally, the aspartyl protease mediates proteolytic cleavages of Gag and Gag-Pol polyproteins during or shortly after the release of the virion from the plasma membrane. Cleavages take place as an ordered, step-wise cascade to yield mature proteins. This process is called maturation. Displays maximal activity during the budding process just prior to particle release from the cell (Potential). Cleaves the translation initiation factor eIF4G leading to the inhibition of host cap-dependent translation. Its function is as follows. RT is a multifunctional enzyme that converts the viral RNA genome into dsDNA in the cytoplasm, shortly after virus entry into the cell. This enzyme displays a DNA polymerase activity that can copy either DNA or RNA templates, and a ribonuclease H (RNase H) activity that cleaves the RNA strand of RNA-DNA heteroduplexes in a partially processive 3' to 5'-endonucleasic mode. Conversion of viral genomic RNA into dsDNA requires many steps. A tRNA-Pro binds to the primer-binding site (PBS) situated at the 5'-end of the viral RNA. RT uses the 3' end of the tRNA primer to perform a short round of RNA-dependent minus-strand DNA synthesis. The reading proceeds through the U5 region and ends after the repeated (R) region which is present at both ends of viral RNA. The portion of the RNA-DNA heteroduplex is digested by the RNase H, resulting in a ssDNA product attached to the tRNA primer. This ssDNA/tRNA hybridizes with the identical R region situated at the 3' end of viral RNA. This template exchange, known as minus-strand DNA strong stop transfer, can be either intra- or intermolecular. RT uses the 3' end of this newly synthesized short ssDNA to perform the RNA-dependent minus-strand DNA synthesis of the whole template. RNase H digests the RNA template except for a polypurine tract (PPT) situated at the 5' end of the genome. It is not clear if both polymerase and RNase H activities are simultaneous. RNase H probably can proceed both in a polymerase-dependent (RNA cut into small fragments by the same RT performing DNA synthesis) and a polymerase-independent mode (cleavage of remaining RNA fragments by free RTs). Secondly, RT performs DNA-directed plus-strand DNA synthesis using the PPT that has not been removed by RNase H as primer. PPT and tRNA primers are then removed by RNase H. The 3' and 5' ssDNA PBS regions hybridize to form a circular dsDNA intermediate. Strand displacement synthesis by RT to the PBS and PPT ends produces a blunt ended, linear dsDNA copy of the viral genome that includes long terminal repeats (LTRs) at both ends. In terms of biological role, catalyzes viral DNA integration into the host chromosome, by performing a series of DNA cutting and joining reactions. This chain is Gag-Pro-Pol polyprotein (gag-pro-pol), found in Human T-cell leukemia virus 2 (HTLV-2).